We begin with the raw amino-acid sequence, 33 residues long: Pardaxin P-2 (33 aa).

It belongs to the pardaxin family. As to quaternary structure, in aqueous solution exists as a tetramer.

It is found in the secreted. The protein localises to the target cell membrane. Exhibits unusual shark repellent and surfactant properties. Forms voltage-dependent, ion-permeable channels in membranes. At high concentration causes cell membrane lysis. The protein is Pardaxin P-2 of Pardachirus pavoninus (Peacock sole).